Reading from the N-terminus, the 698-residue chain is Elongation factor G 2 (698 aa).

One can recognise a tr-type G domain in the interval 8–290 (ERYRNIGIMA…AVVDYLPSPV (283 aa)). GTP contacts are provided by residues 17-24 (AHIDAGKT), 88-92 (DTPGH), and 142-145 (NKMD).

Belongs to the TRAFAC class translation factor GTPase superfamily. Classic translation factor GTPase family. EF-G/EF-2 subfamily.

It is found in the cytoplasm. Catalyzes the GTP-dependent ribosomal translocation step during translation elongation. During this step, the ribosome changes from the pre-translocational (PRE) to the post-translocational (POST) state as the newly formed A-site-bound peptidyl-tRNA and P-site-bound deacylated tRNA move to the P and E sites, respectively. Catalyzes the coordinated movement of the two tRNA molecules, the mRNA and conformational changes in the ribosome. The protein is Elongation factor G 2 of Methylococcus capsulatus (strain ATCC 33009 / NCIMB 11132 / Bath).